A 276-amino-acid chain; its full sequence is UPF0276 protein Caul_0757 (276 aa).

Belongs to the UPF0276 family.

This chain is UPF0276 protein Caul_0757, found in Caulobacter sp. (strain K31).